The chain runs to 210 residues: Ribosomal RNA large subunit methyltransferase E (210 aa).

Residues glycine 67, tryptophan 69, aspartate 87, aspartate 103, and aspartate 128 each coordinate S-adenosyl-L-methionine. Lysine 168 functions as the Proton acceptor in the catalytic mechanism.

The protein belongs to the class I-like SAM-binding methyltransferase superfamily. RNA methyltransferase RlmE family.

It localises to the cytoplasm. It carries out the reaction uridine(2552) in 23S rRNA + S-adenosyl-L-methionine = 2'-O-methyluridine(2552) in 23S rRNA + S-adenosyl-L-homocysteine + H(+). Functionally, specifically methylates the uridine in position 2552 of 23S rRNA at the 2'-O position of the ribose in the fully assembled 50S ribosomal subunit. This is Ribosomal RNA large subunit methyltransferase E from Psychrobacter sp. (strain PRwf-1).